A 405-amino-acid chain; its full sequence is Coiled-coil domain-containing protein 91 (405 aa).

Residues 1 to 16 (MDDDDFGGFEAAETFD) form a GGA1-binding motif region. The disordered stretch occupies residues 1-27 (MDDDDFGGFEAAETFDGGNGETQTTSP). Phosphoserine is present on residues S43 and S46. Residues 126–376 (GANVSNIQLR…QKRLDQVIRQ (251 aa)) are a coiled coil. The tract at residues 210–377 (LSIIVDEYKH…KRLDQVIRQR (168 aa)) is homodimerization.

In terms of assembly, homodimer. Interacts with GGA1, GGA2 and AP1G1.

The protein localises to the membrane. It is found in the golgi apparatus. It localises to the trans-Golgi network membrane. Its subcellular location is the trans-Golgi network. Its function is as follows. Involved in the regulation of membrane traffic through the trans-Golgi network (TGN). Functions in close cooperation with the GGAs in the sorting of hydrolases to lysosomes. The sequence is that of Coiled-coil domain-containing protein 91 (CCDC91) from Pongo abelii (Sumatran orangutan).